Here is a 150-residue protein sequence, read N- to C-terminus: Small ribosomal subunit protein eS19 (150 aa).

Belongs to the eukaryotic ribosomal protein eS19 family. In terms of assembly, part of the 30S ribosomal subunit.

Functionally, may be involved in maturation of the 30S ribosomal subunit. This is Small ribosomal subunit protein eS19 (rps19e) from Pyrococcus abyssi (strain GE5 / Orsay).